A 412-amino-acid polypeptide reads, in one-letter code: Transforming growth factor beta-2 proprotein (412 aa).

The first 20 residues, 1–20, serve as a signal peptide directing secretion; the sequence is MHCYLLSVFLTLDLAAVALS. N-linked (GlcNAc...) asparagine glycosylation is found at Asn72, Asn139, and Asn240. 4 cysteine pairs are disulfide-bonded: Cys307/Cys316, Cys315/Cys378, Cys344/Cys409, and Cys348/Cys411.

The protein belongs to the TGF-beta family. Interacts with Transforming growth factor beta-2 (TGF-beta-2) chain; interaction is non-covalent and maintains (TGF-beta-2) in a latent state. In terms of assembly, homodimer; disulfide-linked. Interacts with TGF-beta receptors (TGFBR1 and TGFBR2), leading to signal transduction. In terms of processing, the precursor proprotein is cleaved in the Golgi apparatus to form Transforming growth factor beta-2 (TGF-beta-2) and Latency-associated peptide (LAP) chains, which remain non-covalently linked, rendering TGF-beta-2 inactive.

It localises to the secreted. Its subcellular location is the extracellular space. The protein localises to the extracellular matrix. Functionally, precursor of the Latency-associated peptide (LAP) and Transforming growth factor beta-2 (TGF-beta-2) chains, which constitute the regulatory and active subunit of TGF-beta-2, respectively. Its function is as follows. Required to maintain the Transforming growth factor beta-2 (TGF-beta-2) chain in a latent state during storage in extracellular matrix. Associates non-covalently with TGF-beta-2 and regulates its activation via interaction with 'milieu molecules', such as LTBP1 and LRRC32/GARP, that control activation of TGF-beta-2. In terms of biological role, multifunctional protein that regulates various processes such as angiogenesis and heart development. Activation into mature form follows different steps: following cleavage of the proprotein in the Golgi apparatus, Latency-associated peptide (LAP) and Transforming growth factor beta-2 (TGF-beta-2) chains remain non-covalently linked rendering TGF-beta-2 inactive during storage in extracellular matrix. At the same time, LAP chain interacts with 'milieu molecules', such as LTBP1 and LRRC32/GARP, that control activation of TGF-beta-2 and maintain it in a latent state during storage in extracellular milieus. Once activated following release of LAP, TGF-beta-2 acts by binding to TGF-beta receptors (TGFBR1 and TGFBR2), which transduce signal. This is Transforming growth factor beta-2 proprotein (TGFB2) from Gallus gallus (Chicken).